Reading from the N-terminus, the 287-residue chain is Pyridoxal kinase PdxY (287 aa).

Substrate is bound by residues Ser-9 and 44-45 (MQ). Asp-111, Ala-142, Glu-147, and Lys-180 together coordinate ATP. Substrate is bound at residue Asp-221.

This sequence belongs to the pyridoxine kinase family. PdxY subfamily. As to quaternary structure, homodimer. Mg(2+) is required as a cofactor.

It catalyses the reaction pyridoxal + ATP = pyridoxal 5'-phosphate + ADP + H(+). It functions in the pathway cofactor metabolism; pyridoxal 5'-phosphate salvage; pyridoxal 5'-phosphate from pyridoxal: step 1/1. Pyridoxal kinase involved in the salvage pathway of pyridoxal 5'-phosphate (PLP). Catalyzes the phosphorylation of pyridoxal to PLP. The chain is Pyridoxal kinase PdxY from Burkholderia thailandensis (strain ATCC 700388 / DSM 13276 / CCUG 48851 / CIP 106301 / E264).